We begin with the raw amino-acid sequence, 529 residues long: [Pyruvate dehydrogenase [acetyl-transferring]]-phosphatase 2, mitochondrial (529 aa).

A mitochondrion-targeting transit peptide spans 1 to 66 (MSSTVSYWIL…FTLCKAYRHT (66 aa)). In terms of domain architecture, PPM-type phosphatase spans 106–517 (VLRFESNQLA…DDITVTVVYF (412 aa)). D141, G142, D412, and D508 together coordinate Mn(2+).

The protein belongs to the PP2C family. The cofactor is Mg(2+).

It is found in the mitochondrion. It catalyses the reaction O-phospho-L-seryl-[pyruvate dehydrogenase E1 alpha subunit] + H2O = L-seryl-[pyruvate dehydrogenase E1 alpha subunit] + phosphate. Mitochondrial enzyme that catalyzes the dephosphorylation and concomitant reactivation of the alpha subunit of the E1 component of the pyruvate dehydrogenase complex (PDC), thereby stimulating the conversion of pyruvate into acetyl-CoA. Acts as a crucial regulator of T cell metabolism and function, with a particular focus on T-helper Th17. This Homo sapiens (Human) protein is [Pyruvate dehydrogenase [acetyl-transferring]]-phosphatase 2, mitochondrial.